The chain runs to 331 residues: Large ribosomal subunit protein uL3 (331 aa).

This sequence belongs to the universal ribosomal protein uL3 family. Part of the 50S ribosomal subunit. Forms a cluster with proteins L14 and L24e.

Functionally, one of the primary rRNA binding proteins, it binds directly near the 3'-end of the 23S rRNA, where it nucleates assembly of the 50S subunit. This chain is Large ribosomal subunit protein uL3, found in Thermoplasma acidophilum (strain ATCC 25905 / DSM 1728 / JCM 9062 / NBRC 15155 / AMRC-C165).